The following is a 194-amino-acid chain: MELLKNKIIEEGRVLSDTVLKVDSFLNHQVDPKLMKQVGEEFAKKFRNTGITKILTIESSGIAPATMTGLELDVPVIFARKRKSLTLTDHLFTAEVYSYTKKTSNEISVSKDFLHEDDIVLVMDDFLANGQAALGLLEIAKQAKATVVGVGIVIEKGFQTGGKQLRDKGIRVESLAIVESLSDGTVRFKEEARI.

The xanthine site is built by L20 and N27. Residue 128–132 (ANGQA) coordinates 5-phospho-alpha-D-ribose 1-diphosphate. K156 contacts xanthine.

The protein belongs to the purine/pyrimidine phosphoribosyltransferase family. Xpt subfamily. As to quaternary structure, homodimer.

It is found in the cytoplasm. It catalyses the reaction XMP + diphosphate = xanthine + 5-phospho-alpha-D-ribose 1-diphosphate. It functions in the pathway purine metabolism; XMP biosynthesis via salvage pathway; XMP from xanthine: step 1/1. Functionally, converts the preformed base xanthine, a product of nucleic acid breakdown, to xanthosine 5'-monophosphate (XMP), so it can be reused for RNA or DNA synthesis. In Oceanobacillus iheyensis (strain DSM 14371 / CIP 107618 / JCM 11309 / KCTC 3954 / HTE831), this protein is Xanthine phosphoribosyltransferase.